We begin with the raw amino-acid sequence, 218 residues long: Octanoyltransferase (218 aa).

Residues 31-206 form the BPL/LPL catalytic domain; sequence EETPDEVWLV…ELVNLLGYEQ (176 aa). Residues 70–77, 137–139, and 150–152 contribute to the substrate site; these read RGGQVTYH, SLG, and GLA. Cysteine 168 acts as the Acyl-thioester intermediate in catalysis.

Belongs to the LipB family.

It is found in the cytoplasm. The catalysed reaction is octanoyl-[ACP] + L-lysyl-[protein] = N(6)-octanoyl-L-lysyl-[protein] + holo-[ACP] + H(+). The protein operates within protein modification; protein lipoylation via endogenous pathway; protein N(6)-(lipoyl)lysine from octanoyl-[acyl-carrier-protein]: step 1/2. Its function is as follows. Catalyzes the transfer of endogenously produced octanoic acid from octanoyl-acyl-carrier-protein onto the lipoyl domains of lipoate-dependent enzymes. Lipoyl-ACP can also act as a substrate although octanoyl-ACP is likely to be the physiological substrate. This chain is Octanoyltransferase, found in Vibrio vulnificus (strain YJ016).